Reading from the N-terminus, the 343-residue chain is L-threonine 3-dehydrogenase (343 aa).

C40 is a Zn(2+) binding site. Residues T42 and H45 each act as charge relay system in the active site. H65, E66, C95, C98, C101, and C109 together coordinate Zn(2+). Residues I177, D197, R202, 264-266 (LGI), and 288-289 (IY) contribute to the NAD(+) site.

The protein belongs to the zinc-containing alcohol dehydrogenase family. Homotetramer. The cofactor is Zn(2+).

Its subcellular location is the cytoplasm. The catalysed reaction is L-threonine + NAD(+) = (2S)-2-amino-3-oxobutanoate + NADH + H(+). It participates in amino-acid degradation; L-threonine degradation via oxydo-reductase pathway; glycine from L-threonine: step 1/2. Catalyzes the NAD(+)-dependent oxidation of L-threonine to 2-amino-3-ketobutyrate. This Vibrio vulnificus (strain CMCP6) protein is L-threonine 3-dehydrogenase.